An 862-amino-acid chain; its full sequence is DNA mismatch repair protein MutS (862 aa).

Residue 608–615 (GPNMAGKS) participates in ATP binding.

The protein belongs to the DNA mismatch repair MutS family.

Functionally, this protein is involved in the repair of mismatches in DNA. It is possible that it carries out the mismatch recognition step. This protein has a weak ATPase activity. The polypeptide is DNA mismatch repair protein MutS (Bacteroides fragilis (strain YCH46)).